A 129-amino-acid chain; its full sequence is Small ribosomal subunit protein uS11 (129 aa).

Belongs to the universal ribosomal protein uS11 family. In terms of assembly, part of the 30S ribosomal subunit. Interacts with proteins S7 and S18. Binds to IF-3.

Its function is as follows. Located on the platform of the 30S subunit, it bridges several disparate RNA helices of the 16S rRNA. Forms part of the Shine-Dalgarno cleft in the 70S ribosome. The protein is Small ribosomal subunit protein uS11 of Desulfitobacterium hafniense (strain DSM 10664 / DCB-2).